The sequence spans 146 residues: Acidic phospholipase A2 D (146 aa).

The signal sequence occupies residues 1-21; that stretch reads MNPAHLLILAAVCVSPLGASS. A propeptide spanning residues 22–27 is cleaved from the precursor; that stretch reads NRPMPL. 7 cysteine pairs are disulfide-bonded: Cys-38-Cys-98, Cys-53-Cys-145, Cys-55-Cys-71, Cys-70-Cys-126, Cys-77-Cys-119, Cys-87-Cys-112, and Cys-105-Cys-117. 3 residues coordinate Ca(2+): Tyr-54, Gly-56, and Gly-58. His-74 is a catalytic residue. Asp-75 serves as a coordination point for Ca(2+). Asp-120 is an active-site residue.

It belongs to the phospholipase A2 family. Group I subfamily. D49 sub-subfamily. Ca(2+) is required as a cofactor. Expressed by the venom gland.

The protein resides in the secreted. The catalysed reaction is a 1,2-diacyl-sn-glycero-3-phosphocholine + H2O = a 1-acyl-sn-glycero-3-phosphocholine + a fatty acid + H(+). Its function is as follows. PLA2 catalyzes the calcium-dependent hydrolysis of the 2-acyl groups in 3-sn-phosphoglycerides. This is Acidic phospholipase A2 D from Naja sputatrix (Malayan spitting cobra).